Here is a 358-residue protein sequence, read N- to C-terminus: MLQLLVEFFSLTENQAYNNMSSKYTVTVLGGGSFGTAVANIIATNGHVSRLWMRDAARAERCQASRENTEYLPGYPLHDNLVATTDLIGSVSTSDIVVISVPSQSFREVAKLAAPHLRKDTIVISTTKGIDADGFFLMSQILEQELTDVRIGVLSGPNFAKEIVQNQYTGSVVASEHDEVLKCVQQVFSSNTFRIYSNPDRYGVELGGALKNIYAMVTGMAAALGCGHNTMAMLLTRSLAEMGRFARELGADSMTFLGLAGMGDLVLTCTSDLSRNYRVGFAVGRGKSLEQAVQEIGQVAEGVNTLRIVKKKAEELNVYMPLVDGLHAVLFDKQDLQQVIQGLMTGEMSSDVDLQGGL.

NADPH contacts are provided by Ser33, Phe34, Arg54, and Lys128. Sn-glycerol 3-phosphate-binding residues include Lys128 and Gly156. Ala160 is a binding site for NADPH. Sn-glycerol 3-phosphate contacts are provided by Lys211, Asp264, Ser274, Arg275, and Asn276. Residue Lys211 is the Proton acceptor of the active site. Arg275 lines the NADPH pocket. The NADPH site is built by Val299 and Glu301.

The protein belongs to the NAD-dependent glycerol-3-phosphate dehydrogenase family.

Its subcellular location is the cytoplasm. The enzyme catalyses sn-glycerol 3-phosphate + NAD(+) = dihydroxyacetone phosphate + NADH + H(+). It carries out the reaction sn-glycerol 3-phosphate + NADP(+) = dihydroxyacetone phosphate + NADPH + H(+). The protein operates within membrane lipid metabolism; glycerophospholipid metabolism. In terms of biological role, catalyzes the reduction of the glycolytic intermediate dihydroxyacetone phosphate (DHAP) to sn-glycerol 3-phosphate (G3P), the key precursor for phospholipid synthesis. In Saccharophagus degradans (strain 2-40 / ATCC 43961 / DSM 17024), this protein is Glycerol-3-phosphate dehydrogenase [NAD(P)+].